Consider the following 507-residue polypeptide: Cytochrome P450 monooxygenase tpeC (507 aa).

The chain crosses the membrane as a helical span at residues 24–44 (TLAIALIVGFVILKAIYNVFF). C449 contributes to the heme binding site.

It belongs to the cytochrome P450 family. Heme is required as a cofactor.

The protein resides in the membrane. It participates in secondary metabolite biosynthesis. Cytochrome P450 monooxygenase; part of the gene cluster that mediates the biosynthesis of polyesters containing 2,4-dihydroxy-6-(2-hydroxypropyl)benzoate and 3-hydroxybutyrate moieties, such as talapolyester G, 15G256beta and 15G256beta-2; as well as to oxidized derivatives such as 15G256alpha. The biosynthesis of the polyesters probably starts with the formation of the diketide 3-hydroxybutyryl-S-ACP catalyzed by the partially reducing polyketide synthase tpeA. The acceptance of 3-hydroxybutyryl by the non-reducing polyketide synthase tpeB would initiate further elongation and cyclization, catalyzed by KS and PT, respectively, to form 2,4-dihydroxy-6-(2-hydroxyn-propyl)benzoyl-S-ACP intermediate. The TE domain could catalyze lactonization at this step to yield 6-hydroxymellein as a derailment product. The polyesterification process maybe occurs when additional molecules of 3-hydroxybutyryl are transferred to tpeB. Following the first esterification step, an intramolecular cyclization catalyzed by the TE domain of tpeB would give talarodioxadione 1, whereas the ethyl esterification of talapolyester G perhaps happens spontaneously. Further oxidation by the cytochrome P450 monooxygenase tpeC then leads to the formation of oxidized derivatives. This Talaromyces stipitatus (strain ATCC 10500 / CBS 375.48 / QM 6759 / NRRL 1006) (Penicillium stipitatum) protein is Cytochrome P450 monooxygenase tpeC.